The primary structure comprises 130 residues: MAKVQYFGTGRRKKSVARVRLVAGDGKVIINNRDIENYFPIETLRVIVNQPLVLTETKDKYDVLVNVHGGGFTGQAGAVRHGISRALVKADENMKSSLKKAGFLTRDPRMKERKKYGLKKARRSPQFSKR.

The tract at residues 102–130 (GFLTRDPRMKERKKYGLKKARRSPQFSKR) is disordered. Residues 111–130 (KERKKYGLKKARRSPQFSKR) are compositionally biased toward basic residues.

The protein belongs to the universal ribosomal protein uS9 family.

This chain is Small ribosomal subunit protein uS9, found in Clostridium botulinum (strain ATCC 19397 / Type A).